Here is a 79-residue protein sequence, read N- to C-terminus: Cytochrome c oxidase assembly factor 6 homolog (79 aa).

The 44-residue stretch at 9–52 folds into the CHCH domain; the sequence is RQACWGARDEYWKCLDENTEDASKCKKLRSSFESSCPQQWIKYF. The Cx9C motif motif lies at 12–22; that stretch reads CWGARDEYWKC. 2 disulfides stabilise this stretch: C12-C44 and C22-C33. Residues 33–44 carry the Cx10C motif motif; it reads CKKLRSSFESSC.

The protein belongs to the cytochrome c oxidase subunit 6B family. As to quaternary structure, found in a complex with TMEM177, COX20, MT-CO2/COX2, COX18, SCO1 and SCO2. Interacts with COA1, MT-CO2/COX2, SCO1, SCO2 and COX20. Interacts with COX20 in a MT-CO2/COX2- and COX18-dependent manner. Interacts with COX16.

It localises to the mitochondrion intermembrane space. Its function is as follows. Involved in the maturation of the mitochondrial respiratory chain complex IV subunit MT-CO2/COX2. Thereby, may regulate early steps of complex IV assembly. Mitochondrial respiratory chain complex IV or cytochrome c oxidase is the component of the respiratory chain that catalyzes the transfer of electrons from intermembrane space cytochrome c to molecular oxygen in the matrix and as a consequence contributes to the proton gradient involved in mitochondrial ATP synthesis. May also be required for efficient formation of respiratory supercomplexes comprised of complexes III and IV. In Bos taurus (Bovine), this protein is Cytochrome c oxidase assembly factor 6 homolog (COA6).